A 270-amino-acid chain; its full sequence is 4-hydroxy-tetrahydrodipicolinate reductase (270 aa).

NAD(+) is bound by residues 9-14 (GAGGRM) and E35. Residue R36 participates in NADP(+) binding. NAD(+)-binding positions include 99-101 (GTT) and 123-126 (ASNF). Residue H156 is the Proton donor/acceptor of the active site. H157 contacts (S)-2,3,4,5-tetrahydrodipicolinate. The active-site Proton donor is K160. 166–167 (GT) lines the (S)-2,3,4,5-tetrahydrodipicolinate pocket.

Belongs to the DapB family.

It localises to the cytoplasm. The enzyme catalyses (S)-2,3,4,5-tetrahydrodipicolinate + NAD(+) + H2O = (2S,4S)-4-hydroxy-2,3,4,5-tetrahydrodipicolinate + NADH + H(+). It catalyses the reaction (S)-2,3,4,5-tetrahydrodipicolinate + NADP(+) + H2O = (2S,4S)-4-hydroxy-2,3,4,5-tetrahydrodipicolinate + NADPH + H(+). It functions in the pathway amino-acid biosynthesis; L-lysine biosynthesis via DAP pathway; (S)-tetrahydrodipicolinate from L-aspartate: step 4/4. Catalyzes the conversion of 4-hydroxy-tetrahydrodipicolinate (HTPA) to tetrahydrodipicolinate. This Haemophilus influenzae (strain PittEE) protein is 4-hydroxy-tetrahydrodipicolinate reductase.